A 217-amino-acid chain; its full sequence is Small ribosomal subunit protein uS3 (217 aa).

Residues 38–106 (IRKFVQKELA…QVHINIIEIK (69 aa)) enclose the KH type-2 domain.

This sequence belongs to the universal ribosomal protein uS3 family. As to quaternary structure, part of the 30S ribosomal subunit. Forms a tight complex with proteins S10 and S14.

Its function is as follows. Binds the lower part of the 30S subunit head. Binds mRNA in the 70S ribosome, positioning it for translation. The sequence is that of Small ribosomal subunit protein uS3 from Streptococcus pneumoniae serotype 19F (strain G54).